The chain runs to 142 residues: Large ribosomal subunit protein uL13 (142 aa).

Belongs to the universal ribosomal protein uL13 family. As to quaternary structure, part of the 50S ribosomal subunit.

This protein is one of the early assembly proteins of the 50S ribosomal subunit, although it is not seen to bind rRNA by itself. It is important during the early stages of 50S assembly. This Aliivibrio salmonicida (strain LFI1238) (Vibrio salmonicida (strain LFI1238)) protein is Large ribosomal subunit protein uL13.